A 509-amino-acid chain; its full sequence is H/ACA ribonucleoprotein complex subunit DKC1 (509 aa).

The disordered stretch occupies residues 1-25 (MADAEAAMTFPKKHKKKKERKPLPE). Position 2 is an N-acetylalanine (alanine 2). Residues 2–22 (ADAEAAMTFPKKHKKKKERKP) are nucleolar localization. The segment covering 11–20 (PKKHKKKKER) has biased composition (basic residues). Residues lysine 21, lysine 40, and lysine 44 each participate in a glycyl lysine isopeptide (Lys-Gly) (interchain with G-Cter in SUMO2) cross-link. Aspartate 126 serves as the catalytic Nucleophile. Lysine 192 participates in a covalent cross-link: Glycyl lysine isopeptide (Lys-Gly) (interchain with G-Cter in SUMO2). One can recognise a PUA domain in the interval 297–372 (HKRLVMKDSA…VVAKIKRVIM (76 aa)). The segment at 381–509 (WGLGPKASQK…KARAAEELSG (129 aa)) is disordered. At serine 388 the chain carries Phosphoserine. Glycyl lysine isopeptide (Lys-Gly) (interchain with G-Cter in SUMO2) cross-links involve residues lysine 395 and lysine 425. Basic and acidic residues predominate over residues 416–425 (DYVDYSDSSK). The segment at 447–509 (KRKRDSDSDA…KARAAEELSG (63 aa)) is nuclear and nucleolar localization. Residues serine 452 and serine 454 each carry the phosphoserine modification. The residue at position 460 (threonine 460) is a Phosphothreonine. Over residues 466–475 (RVKKEKKKKK) the composition is skewed to basic residues. Positions 481 to 490 (GEEAAEDGDG) are enriched in acidic residues. Position 508 is a phosphoserine (serine 508).

Belongs to the pseudouridine synthase TruB family. As to quaternary structure, part of the H/ACA small nucleolar ribonucleoprotein (H/ACA snoRNP) complex, which contains NHP2/NOLA2, GAR1/NOLA1, NOP10/NOLA3, and DKC1/NOLA4, which is presumed to be the catalytic subunit. The complex contains a stable core formed by binding of one or two NOP10-DKC1 heterodimers to NHP2; GAR1 subsequently binds to this core via DKC1. The complex binds a box H/ACA small nucleolar RNA (snoRNA), which may target the specific site of modification within the RNA substrate. During assembly, the complex contains NAF1 instead of GAR1/NOLA1. The complex also interacts with TERC, which contains a 3'-terminal domain related to the box H/ACA snoRNAs. Specific interactions with snoRNAs or TERC are mediated by GAR1 and NHP2. Associates with NOLC1/NOPP140. H/ACA snoRNPs interact with the SMN complex, consisting of SMN1 or SMN2, GEMIN2/SIP1, DDX20/GEMIN3, and GEMIN4. This is mediated by interaction between GAR1 and SMN1 or SMN2. The SMN complex may be required for correct assembly of the H/ACA snoRNP complex. Component of the telomerase holoenzyme complex composed of one molecule of TERT, one molecule of WRAP53/TCAB1, two molecules of H/ACA ribonucleoprotein complex subunits DKC1, NOP10, NHP2 and GAR1, and a telomerase RNA template component (TERC). The telomerase holoenzyme complex is associated with TEP1, SMG6/EST1A and POT1. Interacts with SHQ1; this interaction may lead to the stabilization of DKC1, from the time of its synthesis until its association with NOP10, NHP2, and NAF1 at the nascent H/ACA RNA. Interacts with HMBOX1. Interacts with DHX36.

It localises to the nucleus. Its subcellular location is the nucleolus. It is found in the cajal body. The catalysed reaction is uridine in 5S rRNA = pseudouridine in 5S rRNA. Functionally, catalytic subunit of H/ACA small nucleolar ribonucleoprotein (H/ACA snoRNP) complex, which catalyzes pseudouridylation of rRNA. This involves the isomerization of uridine such that the ribose is subsequently attached to C5, instead of the normal N1. Each rRNA can contain up to 100 pseudouridine ('psi') residues, which may serve to stabilize the conformation of rRNAs. Required for ribosome biogenesis and telomere maintenance. Also required for correct processing or intranuclear trafficking of TERC, the RNA component of the telomerase reverse transcriptase (TERT) holoenzyme. In Rattus norvegicus (Rat), this protein is H/ACA ribonucleoprotein complex subunit DKC1 (Dkc1).